A 266-amino-acid polypeptide reads, in one-letter code: tRNA pseudouridine synthase A (266 aa).

The active-site Nucleophile is the D57. Substrate is bound at residue Y115.

Belongs to the tRNA pseudouridine synthase TruA family. In terms of assembly, homodimer.

The enzyme catalyses uridine(38/39/40) in tRNA = pseudouridine(38/39/40) in tRNA. In terms of biological role, formation of pseudouridine at positions 38, 39 and 40 in the anticodon stem and loop of transfer RNAs. The protein is tRNA pseudouridine synthase A of Buchnera aphidicola subsp. Acyrthosiphon pisum (strain Tuc7).